Consider the following 187-residue polypeptide: UPF0232 protein Mb0004 (187 aa).

Basic and acidic residues-rich tracts occupy residues Met-1–Met-17 and Ala-35–Arg-45. Disordered regions lie at residues Met-1–Asp-23, Ala-35–Pro-75, and Pro-168–Gly-187.

Belongs to the UPF0232 family.

The protein is UPF0232 protein Mb0004 of Mycobacterium bovis (strain ATCC BAA-935 / AF2122/97).